The primary structure comprises 490 residues: Argininosuccinate lyase (490 aa).

It belongs to the lyase 1 family. Argininosuccinate lyase subfamily.

Its subcellular location is the cytoplasm. The catalysed reaction is 2-(N(omega)-L-arginino)succinate = fumarate + L-arginine. It functions in the pathway amino-acid biosynthesis; L-arginine biosynthesis; L-arginine from L-ornithine and carbamoyl phosphate: step 3/3. This chain is Argininosuccinate lyase, found in Bifidobacterium longum subsp. infantis (strain ATCC 15697 / DSM 20088 / JCM 1222 / NCTC 11817 / S12).